Here is a 300-residue protein sequence, read N- to C-terminus: Acyl-CoA-binding domain-containing protein 6 (300 aa).

Low complexity predominate over residues 1-19 (MASRSPSSSPDSATGSGTD). Residues 1-43 (MASRSPSSSPDSATGSGTDPARPDTGEPLGGGSDSDSDFGLGK) are disordered. The 86-residue stretch at 60 to 145 (LENEFESAAD…VHALDPEGSQ (86 aa)) folds into the ACB domain. Residues 87–91 (YARFK), Lys113, and Tyr132 contribute to the an acyl-CoA site. The tract at residues 142 to 162 (EGSQKSSERRGGEKRTGFGGP) is disordered. Residues 147-157 (SSERRGGEKRT) are compositionally biased toward basic and acidic residues. ANK repeat units follow at residues 209 to 238 (EGRA…DINS) and 242 to 271 (EGQT…DPSI). The segment at 270 to 300 (SIKDQEGSLPEEVTESSAISSLLRQYTAPKG) is disordered. The span at 284–293 (ESSAISSLLR) shows a compositional bias: polar residues.

Higly expressed in the central nervous system, developing eyes, otic vesicle, and trunk muscles.

Its subcellular location is the cytoplasm. The protein localises to the nucleus. Its function is as follows. Binds long-chain acyl-coenzyme A molecules with a strong preference for unsaturated C18:1-CoA. Does not bind fatty acids. Plays a role in protein N-myristoylation. The sequence is that of Acyl-CoA-binding domain-containing protein 6 (acbd6) from Danio rerio (Zebrafish).